The chain runs to 267 residues: Indole-3-glycerol phosphate synthase (267 aa).

It belongs to the TrpC family.

The catalysed reaction is 1-(2-carboxyphenylamino)-1-deoxy-D-ribulose 5-phosphate + H(+) = (1S,2R)-1-C-(indol-3-yl)glycerol 3-phosphate + CO2 + H2O. It participates in amino-acid biosynthesis; L-tryptophan biosynthesis; L-tryptophan from chorismate: step 4/5. The protein is Indole-3-glycerol phosphate synthase of Deinococcus radiodurans (strain ATCC 13939 / DSM 20539 / JCM 16871 / CCUG 27074 / LMG 4051 / NBRC 15346 / NCIMB 9279 / VKM B-1422 / R1).